We begin with the raw amino-acid sequence, 278 residues long: Ribosomal RNA small subunit methyltransferase A (278 aa).

Residues asparagine 27, leucine 29, glycine 54, glutamate 75, aspartate 95, and asparagine 118 each coordinate S-adenosyl-L-methionine.

Belongs to the class I-like SAM-binding methyltransferase superfamily. rRNA adenine N(6)-methyltransferase family. RsmA subfamily.

It is found in the cytoplasm. The catalysed reaction is adenosine(1518)/adenosine(1519) in 16S rRNA + 4 S-adenosyl-L-methionine = N(6)-dimethyladenosine(1518)/N(6)-dimethyladenosine(1519) in 16S rRNA + 4 S-adenosyl-L-homocysteine + 4 H(+). Functionally, specifically dimethylates two adjacent adenosines (A1518 and A1519) in the loop of a conserved hairpin near the 3'-end of 16S rRNA in the 30S particle. May play a critical role in biogenesis of 30S subunits. In Chlamydia abortus (strain DSM 27085 / S26/3) (Chlamydophila abortus), this protein is Ribosomal RNA small subunit methyltransferase A.